A 256-amino-acid chain; its full sequence is Metallo-beta-lactamase type 2 (256 aa).

Positions 1-29 are cleaved as a signal peptide; it reads MKNTLLKLGVCVSLLGITPFVSTISSVQA. 5 residues coordinate Zn(2+): His-115, His-117, Asp-119, His-178, and Cys-197. 2 residues coordinate substrate: Lys-200 and Asn-209. Position 239 (His-239) interacts with Zn(2+).

It belongs to the metallo-beta-lactamase superfamily. Class-B beta-lactamase family. Monomer. Zn(2+) serves as cofactor.

It is found in the periplasm. It catalyses the reaction a beta-lactam + H2O = a substituted beta-amino acid. Inhibited by chelating agents such as EDTA. In terms of biological role, confers resistance to the different beta-lactams antibiotics (penicillin, cephalosporin and carbapenem) via the hydrolysis of the beta-lactam ring. Benzylpenicillin is a better substrate than cephalosporin C and ampicillin. In Bacillus cereus, this protein is Metallo-beta-lactamase type 2.